The following is a 702-amino-acid chain: MEVTNLIEKCTKHSKDFATEVEKLWNDELSSESCLSRKTRNVIRNILRDITKSLTTDKKSKCFRILERSTINGEQIKDVYKTIFNNGVDAESRINTTGKYVLFTVMTYAAAELRLIKSDEIFALLSRFFNMICDIHKKYGCGNMFVGIPAALIVLLEIDHINKLFSVFSTRYDAKAYLYTEYFLFLNINHYLLSGSDLFINVAYGAVSFSSPISVPDYIMEALTFKACDHIMKSGDLIYIYAFTKKVKDLFNTKSDSIYQYVRLHEMSYDGVSEDTDDDDEVFAILNLSIDSSVDRYRNRVLLLTPEVASLRKEYSEAEPDYKYLMDEEVPAYDKHLPKPITNTGIEEPHATGGDKEDQPIKVVHPPNNDKDDAIKSYNPLEDPNYVPTITRTAIGIADYQLVINKLIEWLDKCEEECGNGGEFKTELEEAKRKLTELNAELSDKLSKIRTLERDSVYKTERIDRLTKEIKELRDIQNGTDDGSDSSEIDKKTIRELKESLDREREMRSELEKELDTIRDGKVDGSCQGRLELSRMWLKQRDDDLRAEIDKRRNVEWELSKLRRDIKECDKYKEELDKAKTTISNYVSRISTLESEIAKYQQDRDTLSAVRGELEEERRRVRDLESRLDECTHNQKDTQEVDALRSRISELENKLTDCIESGGGNLTEISRLQSRILDLERQLNDCRHNNKTNTETDRNETS.

Residues 342–380 are disordered; the sequence is TNTGIEEPHATGGDKEDQPIKVVHPPNNDKDDAIKSYNP. A compositionally biased stretch (basic and acidic residues) spans 347-360; that stretch reads EEPHATGGDKEDQP. Coiled coils occupy residues 420 to 522 and 548 to 692; these read NGGE…RDGK and EIDK…NNKT.

It belongs to the poxviridae A25 protein family. In terms of assembly, interacts (via N-terminus) with protein A26.

Its subcellular location is the virion. Its function is as follows. Structural protein that forms a matrix surrounding the mature virion (MV) through interaction with protein A26. Presence of protein A25 in the virion structurally prevents direct virus-cell fusion mechanism. This chain is A-type inclusion protein A25 homolog, found in Variola virus (isolate Human/India/Ind3/1967) (VARV).